We begin with the raw amino-acid sequence, 230 residues long: Ribonuclease 3 (230 aa).

In terms of domain architecture, RNase III spans 7 to 134 (LEELESKLGI…VIAAIYLDKG (128 aa)). Glu47 is a binding site for Mg(2+). Residue Asp51 is part of the active site. Mg(2+) is bound by residues Asp120 and Glu123. Glu123 is an active-site residue. The DRBM domain occupies 161–230 (DYKTRLQEIL…ACKALKGLDN (70 aa)).

Belongs to the ribonuclease III family. Homodimer. Requires Mg(2+) as cofactor.

Its subcellular location is the cytoplasm. It carries out the reaction Endonucleolytic cleavage to 5'-phosphomonoester.. In terms of biological role, digests double-stranded RNA. Involved in the processing of primary rRNA transcript to yield the immediate precursors to the large and small rRNAs (23S and 16S). Processes some mRNAs, and tRNAs when they are encoded in the rRNA operon. Processes pre-crRNA and tracrRNA of type II CRISPR loci if present in the organism. The sequence is that of Ribonuclease 3 from Clostridium acetobutylicum (strain ATCC 824 / DSM 792 / JCM 1419 / IAM 19013 / LMG 5710 / NBRC 13948 / NRRL B-527 / VKM B-1787 / 2291 / W).